The following is a 130-amino-acid chain: Fluoride-specific ion channel FluC (130 aa).

The next 4 membrane-spanning stretches (helical) occupy residues 3–23 (FVFL…YFVG), 39–59 (GTFS…HLAV), 67–87 (FGIF…SYGL), and 102–122 (ISYV…GWFL). Residues G77 and T80 each contribute to the Na(+) site.

The protein belongs to the fluoride channel Fluc/FEX (TC 1.A.43) family.

Its subcellular location is the cell inner membrane. The enzyme catalyses fluoride(in) = fluoride(out). Na(+) is not transported, but it plays an essential structural role and its presence is essential for fluoride channel function. In terms of biological role, fluoride-specific ion channel. Important for reducing fluoride concentration in the cell, thus reducing its toxicity. This Helicobacter pylori (strain P12) protein is Fluoride-specific ion channel FluC.